Here is a 376-residue protein sequence, read N- to C-terminus: Transcriptional regulator STP4 (376 aa).

Disordered stretches follow at residues 25-58, 89-122, and 137-210; these read QNYC…PHAS, SSNS…SNSS, and VNCI…NWKP. 2 stretches are compositionally biased toward low complexity: residues 32–50 and 89–103; these read SPSP…TSPP and SSNS…YSPT. 2 stretches are compositionally biased toward polar residues: residues 146 to 183 and 191 to 200; these read PRST…LSVK and EPQNSNTIIS. The C2H2-type zinc finger occupies 241–263; the sequence is HICKYCERGFARPNDLFRHVKCH.

Its subcellular location is the nucleus. In terms of biological role, probable transcription factor involved in response to cell wall damage. The chain is Transcriptional regulator STP4 (STP4) from Candida albicans (strain SC5314 / ATCC MYA-2876) (Yeast).